The primary structure comprises 180 residues: NADH-quinone oxidoreductase subunit I (180 aa).

4Fe-4S ferredoxin-type domains lie at 50 to 80 (LTRD…LQKA) and 90 to 119 (EFFR…MTPD). 8 residues coordinate [4Fe-4S] cluster: Cys-60, Cys-63, Cys-66, Cys-70, Cys-99, Cys-102, Cys-105, and Cys-109.

This sequence belongs to the complex I 23 kDa subunit family. NDH-1 is composed of 14 different subunits. Subunits NuoA, H, J, K, L, M, N constitute the membrane sector of the complex. The cofactor is [4Fe-4S] cluster.

The protein localises to the cell inner membrane. The enzyme catalyses a quinone + NADH + 5 H(+)(in) = a quinol + NAD(+) + 4 H(+)(out). NDH-1 shuttles electrons from NADH, via FMN and iron-sulfur (Fe-S) centers, to quinones in the respiratory chain. The immediate electron acceptor for the enzyme in this species is believed to be ubiquinone. Couples the redox reaction to proton translocation (for every two electrons transferred, four hydrogen ions are translocated across the cytoplasmic membrane), and thus conserves the redox energy in a proton gradient. This is NADH-quinone oxidoreductase subunit I from Acinetobacter baylyi (strain ATCC 33305 / BD413 / ADP1).